The following is a 366-amino-acid chain: MTFLQQANTGVQALSPYQAGKPIEELERELGISNIIKLASNENPFGFPESAKKAIQNQLDNLTRYPDSNGFSLKAAIAEKFNLQPEQITLGNGSNDLIELIAHTFATEGDEIIFSQYAFIVYPLITKAINAKAREIPAKNWGHDLEAFLAAINEKTKLIFIANPNNPTGNFLTEAEIDSFLAKVPPHIVVALDEAYTEFTAKEERVNSLALLKKYPNLVVSRSLSKAYGLAGLRIGFAVSNPEIAGLFNRVRQPFNVNSLALAAAEAVLNDDDFVEKAAENNRRELKRYEEFCQKYGLQYIPSKGNFITIDFQQPAAPVYDALLHEGVIVRPIAGYGMPNHLRISIGLPEENQRLFDALIKILNLK.

Position 226 is an N6-(pyridoxal phosphate)lysine (K226).

Belongs to the class-II pyridoxal-phosphate-dependent aminotransferase family. Histidinol-phosphate aminotransferase subfamily. As to quaternary structure, homodimer. Pyridoxal 5'-phosphate serves as cofactor.

It carries out the reaction L-histidinol phosphate + 2-oxoglutarate = 3-(imidazol-4-yl)-2-oxopropyl phosphate + L-glutamate. The protein operates within amino-acid biosynthesis; L-histidine biosynthesis; L-histidine from 5-phospho-alpha-D-ribose 1-diphosphate: step 7/9. The sequence is that of Histidinol-phosphate aminotransferase 1 from Mannheimia succiniciproducens (strain KCTC 0769BP / MBEL55E).